Reading from the N-terminus, the 458-residue chain is MLPSQSPAIFTVSRLNQTVRLLLEHEMGQVWISGEISNFTQPASGHWYFTLKDDTAQVRCAMFRNSNRRVTFRPQHGQQVLVRANITLYEPRGDYQIIVESMQPAGEGLLQQKYEQLKAKLQAEGLFDQQYKKPLPSPAHCVGVITSKTGAALHDILHVLKRRDPSLPVIIYPTAVQGDDAPGQIVRAIELANQRNECDVLIVGRGGGSLEDLWSFNDERVARAIFASRIPVVSAVGHETDVTIADFVADLRAPTPSAAAEVVSRNQQELLRQVQSAQQRLEMAMDYYLANRTRRFTQIHHRLQQQHPQLWLARQQTMLERLQKRMSFALENQLKRAGQQQQRLTQRLNQQNPQPRIHRAQTRIQQLEYRLAETLRAQLSATRERFGNAVTHLEAVSPLSTLARGYSVTSAADGAVLKQVKQVKAGDTLTTRLGDGVVISEVSAVTKTRKPRKKAANP.

This sequence belongs to the XseA family. As to quaternary structure, heterooligomer composed of large and small subunits.

The protein localises to the cytoplasm. The enzyme catalyses Exonucleolytic cleavage in either 5'- to 3'- or 3'- to 5'-direction to yield nucleoside 5'-phosphates.. Functionally, bidirectionally degrades single-stranded DNA into large acid-insoluble oligonucleotides, which are then degraded further into small acid-soluble oligonucleotides. This Escherichia coli O17:K52:H18 (strain UMN026 / ExPEC) protein is Exodeoxyribonuclease 7 large subunit.